Reading from the N-terminus, the 139-residue chain is MPTINQLVRKPRQSKITKSKSPALNKGYNSFKKSLTDVKSPQKRGVCTRVGTMTPRKPNSALRKYARVRLTNQIEVTAYIPGEGHNLQEHSVVLIRGGRVKDLAGVRYHIVRGALDTAGVNGRLQSRSKYGTKRPKEKK.

Residues 1-44 (MPTINQLVRKPRQSKITKSKSPALNKGYNSFKKSLTDVKSPQKR) are disordered. Residues 9–18 (RKPRQSKITK) are compositionally biased toward basic residues. The span at 19-39 (SKSPALNKGYNSFKKSLTDVK) shows a compositional bias: polar residues. Residue Asp-102 is modified to 3-methylthioaspartic acid.

This sequence belongs to the universal ribosomal protein uS12 family. As to quaternary structure, part of the 30S ribosomal subunit. Contacts proteins S8 and S17. May interact with IF1 in the 30S initiation complex.

Functionally, with S4 and S5 plays an important role in translational accuracy. Its function is as follows. Interacts with and stabilizes bases of the 16S rRNA that are involved in tRNA selection in the A site and with the mRNA backbone. Located at the interface of the 30S and 50S subunits, it traverses the body of the 30S subunit contacting proteins on the other side and probably holding the rRNA structure together. The combined cluster of proteins S8, S12 and S17 appears to hold together the shoulder and platform of the 30S subunit. In Lysinibacillus sphaericus (strain C3-41), this protein is Small ribosomal subunit protein uS12.